The following is a 209-amino-acid chain: HTLV-1 basic zipper factor (209 aa).

The tract at residues 41–165 (EEEETVLDGL…KEKMQELGVD (125 aa)) is disordered. Basic and acidic residues-rich tracts occupy residues 72–87 (PRGE…AEEK) and 94–160 (REKE…EKMQ). Short sequence motifs (nuclear localization signal) lie at residues 87 to 92 (KRKRKK), 116 to 120 (RRKRA), and 137 to 141 (RRERK).

Belongs to the HTLV-1 HBZ protein family. In terms of assembly, interacts with host ATF4; this interaction inhibits viral RNA transcriptional activation by preventing ATF4 binding to Tax-responsive elements. Interacts with host CREB1; this interaction inhibits host CREB1 transcriptional activity. Interacts with host JUN, JUNB and JUND. Interacts with host EP300 and CREBBP; these interactions inhibit the association of the coactivators with the viral promoter. Interacts with host UBR5; this interaction regulates HBZ protein stability. Interacts with XRCC5 and XRCC6. Interacts with IRF7 and IKBKE; this interaction modulates host interferon signaling. Post-translationally, ubiquitinated by host E3 ligase UBR5 leading to HBZ degradation.

The protein resides in the host nucleus. Enhances viral infectivity and persistence, and facilitates proliferation of HTLV-1-infected lymphocytes. Mechanistically, inhibits Tax-mediated viral replication and NF-kappa-B activation. Plays a role in allowing infected T-cells to escape the cytotoxic T-lymphocyte response by maintaining low levels of viral protein production. Also inhibits host EP300 histone acetyltransferase (HAT) activity, reducing levels of acetylated histone H3 at 'Lys-18' (H3K18ac) in infected cells. Contributes to the accumulation of chromosomal abnormalities by inhibiting double-stranded DNA breaks (DSB) repair through the NHEJ pathway. Participates in the modulation of host immune response at multiple levels contributing to abnormal interferon signaling and viral pathogenesis. The polypeptide is HTLV-1 basic zipper factor (HBZ) (Human T-cell leukemia virus 1 (isolate Caribbea HS-35 subtype A) (HTLV-1)).